We begin with the raw amino-acid sequence, 704 residues long: Elongation factor G 1 (704 aa).

The tr-type G domain occupies 8 to 291 (ERYRNIGISA…AVIDYLPSPA (284 aa)). Residues 17 to 24 (AHIDAGKT), 88 to 92 (DTPGH), and 142 to 145 (NKMD) contribute to the GTP site.

This sequence belongs to the TRAFAC class translation factor GTPase superfamily. Classic translation factor GTPase family. EF-G/EF-2 subfamily.

It localises to the cytoplasm. In terms of biological role, catalyzes the GTP-dependent ribosomal translocation step during translation elongation. During this step, the ribosome changes from the pre-translocational (PRE) to the post-translocational (POST) state as the newly formed A-site-bound peptidyl-tRNA and P-site-bound deacylated tRNA move to the P and E sites, respectively. Catalyzes the coordinated movement of the two tRNA molecules, the mRNA and conformational changes in the ribosome. The chain is Elongation factor G 1 from Burkholderia mallei (strain ATCC 23344).